The following is a 404-amino-acid chain: Cysteine desulfurase IscS (404 aa).

Pyridoxal 5'-phosphate is bound by residues Ala-75–Thr-76, Asn-155, Gln-183, and Ser-203–His-205. Lys-206 is subject to N6-(pyridoxal phosphate)lysine. Pyridoxal 5'-phosphate is bound at residue Thr-243. The Cysteine persulfide intermediate role is filled by Cys-328. Residue Cys-328 coordinates [2Fe-2S] cluster.

Belongs to the class-V pyridoxal-phosphate-dependent aminotransferase family. NifS/IscS subfamily. Homodimer. Forms a heterotetramer with IscU, interacts with other sulfur acceptors. Pyridoxal 5'-phosphate serves as cofactor.

The protein resides in the cytoplasm. The enzyme catalyses (sulfur carrier)-H + L-cysteine = (sulfur carrier)-SH + L-alanine. Its pathway is cofactor biosynthesis; iron-sulfur cluster biosynthesis. Functionally, master enzyme that delivers sulfur to a number of partners involved in Fe-S cluster assembly, tRNA modification or cofactor biosynthesis. Catalyzes the removal of elemental sulfur atoms from cysteine to produce alanine. Functions as a sulfur delivery protein for Fe-S cluster synthesis onto IscU, an Fe-S scaffold assembly protein, as well as other S acceptor proteins. In Shewanella putrefaciens (strain CN-32 / ATCC BAA-453), this protein is Cysteine desulfurase IscS.